A 323-amino-acid polypeptide reads, in one-letter code: Sphingolipid delta(4)-desaturase DES1 (323 aa).

Residue Gly-2 is the site of N-myristoyl glycine attachment. The next 2 helical transmembrane spans lie at Pro-41–Val-61 and Trp-68–Ile-88. A Histidine box-1 motif is present at residues His-89–His-93. The chain crosses the membrane as a helical span at residues Ala-102–Ile-122. The short motif at His-128–His-132 is the Histidine box-2 element. 3 helical membrane passes run Phe-152–Phe-172, Tyr-184–Leu-204, and Leu-209–Phe-229. The Histidine box-3 motif lies at His-259 to His-263. Position 307 is a phosphoserine (Ser-307).

Belongs to the fatty acid desaturase type 1 family. DEGS subfamily. In terms of assembly, interacts with RLBP1; the interaction increases synthesis of chromophore-precursors by DEGS1. Post-translationally, myristoylation can target the enzyme to the mitochondria leading to an increase in ceramide levels. As to expression, ubiquitous.

It is found in the mitochondrion membrane. It localises to the endoplasmic reticulum membrane. It catalyses the reaction an N-acylsphinganine + 2 Fe(II)-[cytochrome b5] + O2 + 2 H(+) = an N-acylsphing-4-enine + 2 Fe(III)-[cytochrome b5] + 2 H2O. The enzyme catalyses all-trans-retinol = 11-cis-retinol. The catalysed reaction is all-trans-retinol = 9-cis-retinol. It carries out the reaction all-trans-retinol = 13-cis-retinol. It catalyses the reaction 11-cis-retinol = 13-cis-retinol. The enzyme catalyses 11-cis-retinol = 9-cis-retinol. Has sphingolipid-delta-4-desaturase activity. Converts D-erythro-sphinganine to D-erythro-sphingosine (E-sphing-4-enine). Catalyzes the equilibrium isomerization of retinols. In Homo sapiens (Human), this protein is Sphingolipid delta(4)-desaturase DES1.